Consider the following 190-residue polypeptide: Segregation and condensation protein B (190 aa).

Belongs to the ScpB family. Homodimer. Homodimerization may be required to stabilize the binding of ScpA to the Smc head domains. Component of a cohesin-like complex composed of ScpA, ScpB and the Smc homodimer, in which ScpA and ScpB bind to the head domain of Smc. The presence of the three proteins is required for the association of the complex with DNA.

It is found in the cytoplasm. Its function is as follows. Participates in chromosomal partition during cell division. May act via the formation of a condensin-like complex containing Smc and ScpA that pull DNA away from mid-cell into both cell halves. This Alkaliphilus metalliredigens (strain QYMF) protein is Segregation and condensation protein B.